A 1412-amino-acid polypeptide reads, in one-letter code: DNA-directed RNA polymerase subunit beta' (1412 aa).

Positions 70, 72, 85, and 88 each coordinate Zn(2+). Residues D460, D462, and D464 each contribute to the Mg(2+) site. Positions 819, 893, 900, and 903 each coordinate Zn(2+). The segment at 1391–1412 (AEESFEFGTPETPAAEQQHSGE) is disordered.

This sequence belongs to the RNA polymerase beta' chain family. The RNAP catalytic core consists of 2 alpha, 1 beta, 1 beta' and 1 omega subunit. When a sigma factor is associated with the core the holoenzyme is formed, which can initiate transcription. Mg(2+) serves as cofactor. Zn(2+) is required as a cofactor.

The catalysed reaction is RNA(n) + a ribonucleoside 5'-triphosphate = RNA(n+1) + diphosphate. Functionally, DNA-dependent RNA polymerase catalyzes the transcription of DNA into RNA using the four ribonucleoside triphosphates as substrates. This Paraburkholderia phytofirmans (strain DSM 17436 / LMG 22146 / PsJN) (Burkholderia phytofirmans) protein is DNA-directed RNA polymerase subunit beta'.